The chain runs to 504 residues: 2-isopropylmalate synthase (504 aa).

A Pyruvate carboxyltransferase domain is found at 6–267; that stretch reads IIVFDTTLRD…YTDINFKEIY (262 aa). The Mn(2+) site is built by Asp-15, His-201, His-203, and Asn-237. The interval 391–504 is regulatory domain; the sequence is EIIALSSSEC…ALNSYISMKQ (114 aa).

The protein belongs to the alpha-IPM synthase/homocitrate synthase family. LeuA type 1 subfamily. Homodimer. Mn(2+) is required as a cofactor.

The protein localises to the cytoplasm. The enzyme catalyses 3-methyl-2-oxobutanoate + acetyl-CoA + H2O = (2S)-2-isopropylmalate + CoA + H(+). It participates in amino-acid biosynthesis; L-leucine biosynthesis; L-leucine from 3-methyl-2-oxobutanoate: step 1/4. In terms of biological role, catalyzes the condensation of the acetyl group of acetyl-CoA with 3-methyl-2-oxobutanoate (2-ketoisovalerate) to form 3-carboxy-3-hydroxy-4-methylpentanoate (2-isopropylmalate). This chain is 2-isopropylmalate synthase, found in Campylobacter hominis (strain ATCC BAA-381 / DSM 21671 / CCUG 45161 / LMG 19568 / NCTC 13146 / CH001A).